The following is a 459-amino-acid chain: Sulfite oxidase (459 aa).

Residues 4 to 83 (YPRYTREEVG…LQQYKVGELS (80 aa)) enclose the Cytochrome b5 heme-binding domain. Heme b is bound by residues His40, His65, and His69. The interval 83-115 (SPDEAPAAPDAQDPFAGDPPRHPGLRVNSQKPF) is disordered. Residues 85-100 (DEAPAAPDAQDPFAGD) are compositionally biased toward low complexity. A hinge region spans residues 86 to 95 (EAPAAPDAQD). The segment at 96–323 (PFAGDPPRHP…PSRWQQNDYK (228 aa)) is moco domain. Mo-molybdopterin-binding positions include 136 to 140 (FTRNH), Cys185, Asp244, His283, Arg288, and 299 to 301 (SVK). Residues 324–459 (GFSPCVDWDT…RGVLSTAWHR (136 aa)) are homodimerization.

Homodimer. The cofactor is heme b. It depends on Mo-molybdopterin as a cofactor.

It is found in the mitochondrion intermembrane space. It carries out the reaction sulfite + O2 + H2O = sulfate + H2O2. It participates in energy metabolism; sulfur metabolism. Its function is as follows. Catalyzes the oxidation of sulfite to sulfate, the terminal reaction in the oxidative degradation of sulfur-containing amino acids. This chain is Sulfite oxidase (SUOX), found in Gallus gallus (Chicken).